We begin with the raw amino-acid sequence, 621 residues long: UvrABC system protein C (621 aa).

The region spanning 20–98 (TAPGVYRMYA…IKSLTPRYNV (79 aa)) is the GIY-YIG domain. A UVR domain is found at 207-242 (DLLAEELIQAMQVASEHLEFEQAARLRDLLTSLRSM).

This sequence belongs to the UvrC family. Interacts with UvrB in an incision complex.

The protein localises to the cytoplasm. The UvrABC repair system catalyzes the recognition and processing of DNA lesions. UvrC both incises the 5' and 3' sides of the lesion. The N-terminal half is responsible for the 3' incision and the C-terminal half is responsible for the 5' incision. This is UvrABC system protein C from Xylella fastidiosa (strain Temecula1 / ATCC 700964).